The chain runs to 432 residues: Adenylosuccinate synthetase (432 aa).

GTP-binding positions include 13–19 and 41–43; these read GDEGKGK and GHT. Asp-14 acts as the Proton acceptor in catalysis. Mg(2+) contacts are provided by Asp-14 and Gly-41. IMP contacts are provided by residues 14–17, 39–42, Thr-130, Arg-144, Gln-225, Thr-240, and Arg-304; these read DEGK and NAGH. His-42 functions as the Proton donor in the catalytic mechanism. Substrate is bound at residue 300 to 306; the sequence is ATTGRRR. GTP-binding positions include Arg-306, 332 to 334, and 414 to 416; these read KLD and STG.

This sequence belongs to the adenylosuccinate synthetase family. Homodimer. Mg(2+) is required as a cofactor.

Its subcellular location is the cytoplasm. The catalysed reaction is IMP + L-aspartate + GTP = N(6)-(1,2-dicarboxyethyl)-AMP + GDP + phosphate + 2 H(+). It participates in purine metabolism; AMP biosynthesis via de novo pathway; AMP from IMP: step 1/2. Functionally, plays an important role in the de novo pathway of purine nucleotide biosynthesis. Catalyzes the first committed step in the biosynthesis of AMP from IMP. This is Adenylosuccinate synthetase from Methylococcus capsulatus (strain ATCC 33009 / NCIMB 11132 / Bath).